Here is an 839-residue protein sequence, read N- to C-terminus: Taste receptor type 1 member 2 (839 aa).

Residues 1–19 form the signal peptide; the sequence is MRPRATTICSLFFLLRVLA. Residues 20–566 lie on the Extracellular side of the membrane; sequence EPAKNSDFYL…AFLEWHEAPT (547 aa). N-linked (GlcNAc...) asparagine glycosylation is found at Asn84, Asn127, Asn248, Asn292, Asn312, Asn368, Asn428, Asn487, and Asn527. A helical membrane pass occupies residues 567 to 587; sequence IVVALLAALGFLSTLAILVIF. Topologically, residues 588–602 are cytoplasmic; it reads WRHFQTPMVRSAGGP. The helical transmembrane segment at 603–623 threads the bilayer; that stretch reads MCFLMLTLLLVAYMVVPVYVG. At 624-635 the chain is on the extracellular side; the sequence is PPKVSTCFCRQA. The chain crosses the membrane as a helical span at residues 636–656; the sequence is LFPLCFTICISCIAVRSFQIV. Residues 657–681 are Cytoplasmic-facing; the sequence is CVFKMASRFPRAYSYWVRYQGPYVS. The chain crosses the membrane as a helical span at residues 682-702; it reads MAFITVLKMVTVVIGMLATGL. The Extracellular portion of the chain corresponds to 703–727; the sequence is NPTTRIDPDDPKIMIVSCNPNYRNS. A helical transmembrane segment spans residues 728-748; it reads LFFNTGLDLLLSVVGFSFAYM. Topologically, residues 749–760 are cytoplasmic; that stretch reads GKELPTNYNEAK. Residues 761–781 form a helical membrane-spanning segment; that stretch reads FITLSMTFYFTSSVSLCTFMS. The Extracellular segment spans residues 782 to 784; that stretch reads AYN. A helical membrane pass occupies residues 785–805; the sequence is GVLVTIMDLLVTVLNLLAISL. Residues 806 to 839 lie on the Cytoplasmic side of the membrane; sequence GYFGPKCYMILFYPERNTPAYFNSMIQGYTMRRD.

The protein belongs to the G-protein coupled receptor 3 family. TAS1R subfamily. Forms heterodimers with TAS1R3.

The protein localises to the cell membrane. In terms of biological role, putative taste receptor. TAS1R2/TAS1R3 recognizes diverse natural and synthetic sweeteners. The chain is Taste receptor type 1 member 2 (TAS1R2) from Papio hamadryas (Hamadryas baboon).